A 593-amino-acid chain; its full sequence is Aspartate--tRNA ligase (593 aa).

E180 is an L-aspartate binding site. Residues 204–207 are aspartate; it reads QLFK. Position 226 (R226) interacts with L-aspartate. ATP is bound by residues 226–228 and Q235; that span reads RDE. H454 lines the L-aspartate pocket. E488 contributes to the ATP binding site. R495 contributes to the L-aspartate binding site. Position 540–543 (540–543) interacts with ATP; sequence GFDR.

Belongs to the class-II aminoacyl-tRNA synthetase family. Type 1 subfamily. In terms of assembly, homodimer.

It localises to the cytoplasm. The catalysed reaction is tRNA(Asp) + L-aspartate + ATP = L-aspartyl-tRNA(Asp) + AMP + diphosphate. Its function is as follows. Catalyzes the attachment of L-aspartate to tRNA(Asp) in a two-step reaction: L-aspartate is first activated by ATP to form Asp-AMP and then transferred to the acceptor end of tRNA(Asp). The sequence is that of Aspartate--tRNA ligase from Clostridium novyi (strain NT).